A 780-amino-acid polypeptide reads, in one-letter code: Cullin-5 (780 aa).

Serine 34 carries the post-translational modification Phosphoserine. Threonine 210 carries the post-translational modification Phosphothreonine. A Cullin neddylation domain is found at 711–772 (RILRTQEAII…HKYIRRDESD (62 aa)). A Glycyl lysine isopeptide (Lys-Gly) (interchain with G-Cter in NEDD8) cross-link involves residue lysine 724.

Belongs to the cullin family. Component of multiple cullin-5-RING E3 ubiquitin-protein ligase complexes (ECS complexes, also named CRL5 complexes) formed of CUL5, Elongin BC (ELOB and ELOC), RNF7/RBX2 and a variable SOCS box domain-containing protein as substrate-specific recognition component. CUL5-containing ECS complexes specifically contain RNF7/RBX2, and not RBX1, as catalytic subunit. Component of the ECS(ASB2) complex with the substrate recognition component ASB2. Component of the ECS(ASB6) complex with the substrate recognition component ASB6. Component of the ECS(ASB7) complex with the substrate recognition component ASB7. Component of the ECS(ASB9) complex with the substrate recognition component ASB9. Component of the ECS(ASB11) complex with the substrate recognition component ASB11. Component of the ECS(ASB12) complex with the substrate recognition component ASB12. Component of the ECS(LRRC41) complex with the substrate recognition component LRRC41. Component of the ECS(SOCS1) complex with the substrate recognition component SOCS1. Component of the ECS(SOCS2) complex with the substrate recognition component SOCS2. Component of the ECS(WSB1) complex with the substrate recognition subunit WSB1. Component of the ECS(SOCS3) complex with the substrate recognition component SOCS3. Component of the ECS(SOCS7) complex with the substrate recognition component SOCS7. Component of the ECS(SPSB1) complex with the substrate recognition component SPSB1. Component of the ECS(SPSB3) complex with the substrate recognition component SPSB3. Component of the ECS(SPSB2) complex with the substrate recognition component SPSB2. Component of the ECS(SPSB4) complex with the substrate recognition component SPSB4. Component of the ECS(RAB40) complex with the substrate recognition subunit RAB40A, RAB40B or RAB40C. Component of the ECS(KLHDC1) complex with the substrate recognition component KLHDC1. Component of the ECS(PCMTD1) complex with the substrate recognition subunit PCMTD1. May also form complexes containing RBX1 and ELOA or VHL; additional evidence is however required to confirm this result in vivo. Interacts (when neddylated) with ARIH2; leading to activate the E3 ligase activity of ARIH2. Interacts with ERCC6; the interaction is induced by DNA damaging agents or inhibitors of RNA polymerase II elongation. Interacts with ELOA (via the BC-box). Interacts (unneddylated form) with DCUN1D1, DCUN1D2, DCUN1D3, DCUN1D4 and DCUN1D5; these interactions promote the cullin neddylation. Post-translationally, neddylated; which enhances the ubiquitination activity of ECS complexes and prevents binding of the inhibitor CAND1. Deneddylated via its interaction with the COP9 signalosome (CSN).

The protein localises to the nucleus. Its pathway is protein modification; protein ubiquitination. In terms of biological role, core component of multiple cullin-5-RING E3 ubiquitin-protein ligase complexes (ECS complexes, also named CRL5 complexes), which mediate the ubiquitination and subsequent proteasomal degradation of target proteins. Acts a scaffold protein that contributes to catalysis through positioning of the substrate and the ubiquitin-conjugating enzyme. The functional specificity of the E3 ubiquitin-protein ligase complex depends on the variable SOCS box-containing substrate recognition component. Acts as a key regulator of neuron positioning during cortex development: component of various SOCS-containing ECS complexes, such as the ECS(SOCS7) complex, that regulate reelin signaling by mediating ubiquitination and degradation of DAB1. ECS(SOCS1) seems to direct ubiquitination of JAK2. The ECS(SOCS2) complex mediates the ubiquitination and subsequent proteasomal degradation of phosphorylated EPOR and GHR. The ECS(SPSB3) complex catalyzes ubiquitination of nuclear CGAS. ECS(KLHDC1) complex is part of the DesCEND (destruction via C-end degrons) pathway and mediates ubiquitination and degradation of truncated SELENOS selenoprotein produced by failed UGA/Sec decoding, which ends with a glycine. The ECS(ASB9) complex mediates ubiquitination and degradation of CKB. As part of some ECS complex, promotes 'Lys-11'-linked ubiquitination and degradation of BTRC. As part of a multisubunit ECS complex, polyubiquitinates monoubiquitinated POLR2A. As part of the ECS(RAB40C) complex, mediates ANKRD28 ubiquitination and degradation, thereby regulating protein phosphatase 6 (PP6) complex activity and focal adhesion assembly during cell migration. As part of the ECS(RAB40A) complex, mediates RHOU 'Lys-48'-linked ubiquitination and degradation, thus inhibiting focal adhesion disassembly during cell migration. As part of the ECS(RAB40B) complex, mediates LIMA1/EPLIN and RAP2 ubiquitination, thereby regulating actin cytoskeleton dynamics and stress fiber formation during cell migration. May form a cell surface vasopressin receptor. This chain is Cullin-5, found in Pongo abelii (Sumatran orangutan).